We begin with the raw amino-acid sequence, 277 residues long: Nudix hydrolase 10 (277 aa).

A Nudix hydrolase domain is found at 97–235 (WIPEAESTIP…KNDLFKDIHH (139 aa)). Residues 142–163 (GVVDEGEEIFAAAIREVKEETG) carry the Nudix box motif. Residues glutamate 157 and glutamate 161 each coordinate Mg(2+).

It belongs to the Nudix hydrolase family. Mg(2+) is required as a cofactor. Requires Mn(2+) as cofactor. In terms of tissue distribution, expressed in roots, stems and, at lower level, leaves.

The catalysed reaction is ADP-D-ribose + H2O = D-ribose 5-phosphate + AMP + 2 H(+). It carries out the reaction NAD(+) + H2O = beta-nicotinamide D-ribonucleotide + AMP + 2 H(+). It catalyses the reaction NADH + H2O = reduced beta-nicotinamide D-ribonucleotide + AMP + 2 H(+). Functionally, may mediate the hydrolysis of some nucleoside diphosphate derivatives. In vitro, uses both ADP-ribose and NADH as substrates; however the relevance of such substrates in vivo is unclear. In Arabidopsis thaliana (Mouse-ear cress), this protein is Nudix hydrolase 10 (NUDT10).